A 358-amino-acid chain; its full sequence is DnaJ homolog subfamily B member 11 (358 aa).

The signal sequence occupies residues 1–22 (MAPQNLGTFCLLLLYLIGTVIA). One can recognise a J domain in the interval 25–90 (DFYKILGVPR…EKRKQYDTYG (66 aa)). Threonine 188 carries the phosphothreonine modification. Asparagine 261 carries N-linked (GlcNAc...) asparagine glycosylation.

As to quaternary structure, part of a large chaperone multiprotein complex comprising DNAJB11, HSP90B1, HSPA5, HYOU, PDIA2, PDIA4, PDIA6, PPIB, SDF2L1, UGGT1 and very small amounts of ERP29, but not, or at very low levels, CALR nor CANX. Binds to denatured substrates in an ATP-independent manner. Interacts via the J domain with HSPA5 in an ATP-dependent manner. Post-translationally, contains high-mannose Endo H-sensitive carbohydrates. In terms of processing, cys-169, Cys-171, Cys-193 and Cys-196 form intramolecular disulfide bonds. The preferential partner for each Cys is not known.

Its subcellular location is the endoplasmic reticulum lumen. Its function is as follows. As a co-chaperone for HSPA5 it is required for proper folding, trafficking or degradation of proteins. Binds directly to both unfolded proteins that are substrates for ERAD and nascent unfolded peptide chains, but dissociates from the HSPA5-unfolded protein complex before folding is completed. May help recruiting HSPA5 and other chaperones to the substrate. Stimulates HSPA5 ATPase activity. It is necessary for maturation and correct trafficking of PKD1. This Bos taurus (Bovine) protein is DnaJ homolog subfamily B member 11 (DNAJB11).